The following is a 197-amino-acid chain: Suppressor of RNA silencing p3 (197 aa).

This sequence belongs to the tenuiviruses p3 protein family. In terms of assembly, homodimer.

The protein localises to the host cytoplasm. Acts as a suppressor of RNA-mediated gene silencing, also known as post-transcriptional gene silencing (PTGS), presumably through the binding of dsRNA. The chain is Suppressor of RNA silencing p3 from Rottboellia (Sorghum).